Here is a 582-residue protein sequence, read N- to C-terminus: Aspartate--tRNA ligase (582 aa).

Glu174 provides a ligand contact to L-aspartate. Residues 198–201 (QITK) are aspartate. Arg220 contributes to the L-aspartate binding site. Residues 220–222 (RDE) and Gln229 each bind ATP. His443 provides a ligand contact to L-aspartate. Residue Glu477 participates in ATP binding. Arg484 serves as a coordination point for L-aspartate. 529 to 532 (GLDR) lines the ATP pocket.

It belongs to the class-II aminoacyl-tRNA synthetase family. Type 1 subfamily. Homodimer.

The protein resides in the cytoplasm. It carries out the reaction tRNA(Asp) + L-aspartate + ATP = L-aspartyl-tRNA(Asp) + AMP + diphosphate. Catalyzes the attachment of L-aspartate to tRNA(Asp) in a two-step reaction: L-aspartate is first activated by ATP to form Asp-AMP and then transferred to the acceptor end of tRNA(Asp). The sequence is that of Aspartate--tRNA ligase from Streptococcus pyogenes serotype M6 (strain ATCC BAA-946 / MGAS10394).